A 477-amino-acid polypeptide reads, in one-letter code: Proline--tRNA ligase (477 aa).

L-proline-binding residues include Thr-111, Glu-113, and Arg-142. ATP is bound by residues Arg-142, Thr-153, Gln-225, and Thr-228. An L-proline-binding site is contributed by His-230. 2 residues coordinate ATP: Ser-262 and Arg-264. Residues 340–369 (ELKGVPFRVELGPKDLEGGQAVLASRLGGK) are interaction with tRNA. Zn(2+) contacts are provided by Cys-427, Cys-432, Cys-458, and Cys-461.

Belongs to the class-II aminoacyl-tRNA synthetase family. ProS type 3 subfamily. As to quaternary structure, homodimer. Only one tRNA molecule binds per dimer.

Its subcellular location is the cytoplasm. The catalysed reaction is tRNA(Pro) + L-proline + ATP = L-prolyl-tRNA(Pro) + AMP + diphosphate. In terms of biological role, catalyzes the attachment of proline to tRNA(Pro) in a two-step reaction: proline is first activated by ATP to form Pro-AMP and then transferred to the acceptor end of tRNA(Pro). Can inadvertently accommodate and process cysteine. This Thermus thermophilus (strain ATCC 27634 / DSM 579 / HB8) protein is Proline--tRNA ligase (proS).